The sequence spans 23 residues: Basic phospholipase A2 CTs-G6 (23 aa).

Requires Ca(2+) as cofactor. Contains 7 disulfide bonds. In terms of tissue distribution, expressed by the venom gland.

Its subcellular location is the secreted. It catalyses the reaction a 1,2-diacyl-sn-glycero-3-phosphocholine + H2O = a 1-acyl-sn-glycero-3-phosphocholine + a fatty acid + H(+). Its function is as follows. Snake venom phospholipase A2 (PLA2) that induces local edema a few hours after injection (5-10 ug) in the hind paw. PLA2 catalyzes the calcium-dependent hydrolysis of the 2-acyl groups in 3-sn-phosphoglycerides. The chain is Basic phospholipase A2 CTs-G6 from Trimeresurus stejnegeri (Chinese green tree viper).